We begin with the raw amino-acid sequence, 855 residues long: Cell surface glycoprotein (855 aa).

The first 22 residues, 1 to 22 (MTANKQVRAVLLAALMVFSVFA), serve as a signal peptide directing secretion. N-linked (GlcNAc...) asparagine glycans are attached at residues N78, N83, N108, N167, N174, N187, N203, N227, N230, N313, N363, N441, N548, N588, N608, N620, N642, N656, and N754. The segment covering 782–802 (ETTTAAETTTTEESTETTTTE) has biased composition (low complexity). The disordered stretch occupies residues 782–831 (ETTTAAETTTTEESTETTTTEESTEEPTETATATEEPTEEATEETTESST). The span at 817 to 827 (EPTEEATEETT) shows a compositional bias: acidic residues. The helical transmembrane segment at 831 to 851 (TPGFGVVVALVALVAAALLAV) threads the bilayer. Positions 832 to 834 (PGF) match the PGF sorting signal motif.

It belongs to the halobacterial S-layer protein family. In terms of processing, glycosylated. Post-translationally, cleaved by the archaeosortase ArtA at the C-terminus, with removal of a short hydrophobic segment. Lipidation.

The protein resides in the secreted. Its subcellular location is the cell wall. It is found in the S-layer. The protein localises to the cell membrane. S-layer protein. The S-layer is a paracrystalline mono-layered assembly of proteins which coats the surface of the cell. This chain is Cell surface glycoprotein, found in Haloferax gibbonsii.